Consider the following 220-residue polypeptide: MGKAHATPQLLFGGTFNPVHNGHLVSAMAAREALGVDSVTLLPCYVPPHKTAPTIAAEHRLAMLQHVVQENNHLCIDTCELDAGESIFTVDTLAAKRELWGASASIIWLIGWDSLHNLSRWHRWQSLLTFANLAVVERPFAQSDDINSLPPAVRNWLQQHRVSAKQLTQQANGGVALLHTPRIELSSSDVRQRLGAQKSIQYMVPACVETYIRAHKLYTH.

It belongs to the NadD family.

The enzyme catalyses nicotinate beta-D-ribonucleotide + ATP + H(+) = deamido-NAD(+) + diphosphate. Its pathway is cofactor biosynthesis; NAD(+) biosynthesis; deamido-NAD(+) from nicotinate D-ribonucleotide: step 1/1. In terms of biological role, catalyzes the reversible adenylation of nicotinate mononucleotide (NaMN) to nicotinic acid adenine dinucleotide (NaAD). In Saccharophagus degradans (strain 2-40 / ATCC 43961 / DSM 17024), this protein is Probable nicotinate-nucleotide adenylyltransferase.